Here is a 432-residue protein sequence, read N- to C-terminus: Adenosylhomocysteinase (432 aa).

A disordered region spans residues 1 to 24; the sequence is MSAYSPLSAQLDADTDVDVESTRT. 2 residues coordinate substrate: D137 and E162. Position 163–165 (163–165) interacts with NAD(+); it reads TTT. The substrate site is built by K192 and D196. NAD(+) contacts are provided by residues N197, 226-231, E249, N284, 305-307, and N352; these read GYGYCG and AGH.

It belongs to the adenosylhomocysteinase family. The cofactor is NAD(+).

The protein resides in the cytoplasm. The enzyme catalyses S-adenosyl-L-homocysteine + H2O = L-homocysteine + adenosine. It participates in amino-acid biosynthesis; L-homocysteine biosynthesis; L-homocysteine from S-adenosyl-L-homocysteine: step 1/1. Functionally, may play a key role in the regulation of the intracellular concentration of adenosylhomocysteine. The polypeptide is Adenosylhomocysteinase (Haloquadratum walsbyi (strain DSM 16790 / HBSQ001)).